Reading from the N-terminus, the 1024-residue chain is Protein tiptop (1024 aa).

Over residues 20-35 (ELTSPRCQSRDSNTSA) the composition is skewed to polar residues. Disordered stretches follow at residues 20 to 40 (ELTSPRCQSRDSNTSAGAGAG) and 138 to 215 (EGEV…ISAD). Positions 159-175 (DDQEEDQEQDQEQEQEQ) are enriched in acidic residues. The segment at 317–341 (FKCVWCKQSFSTLANLTAHMKETQH) adopts a C2H2-type 1 zinc-finger fold. The segment at 350–392 (LPTGGVGTPSAPPPTRLATSASNSACSSSSSSTSSSSNSSKSE) is disordered. A compositionally biased stretch (low complexity) spans 368–391 (TSASNSACSSSSSSTSSSSNSSKS). The C2H2-type 2 zinc-finger motif lies at 426-450 (LKCMWCGQSFRSLAEMTSHMQETQH). 5 disordered regions span residues 466–489 (GDERERPTNTGVPSTSTAAPSSPS), 519–576 (AQKS…SLDS), 712–759 (SRDR…IKAE), 786–818 (FSMEACRESPRSVSKSPAPQTERSPPDNGSLLA), and 868–891 (ETTDPPSTGLRSASSAGSSTASAT). The span at 477 to 489 (VPSTSTAAPSSPS) shows a compositional bias: low complexity. Residues 499-523 (LTCKVCDQAFGSLKELSTHMAQKSH) form a C2H2-type 3 zinc finger. Low complexity predominate over residues 527–537 (SPAPSASPPAA). Residues 543–558 (KRGRQNRNEKRKKSLP) show a composition bias toward basic residues. Residues 718 to 729 (SESSSASRVESS) are compositionally biased toward low complexity. Pro residues predominate over residues 745–755 (TPAPPPPPPPT). The segment covering 786–795 (FSMEACRESP) has biased composition (basic and acidic residues). The segment covering 796-808 (RSVSKSPAPQTER) has biased composition (polar residues). Low complexity predominate over residues 874–891 (STGLRSASSAGSSTASAT). The C2H2-type 4 zinc-finger motif lies at 926-949 (IKCSYCDTPFASKGAYRHHLSKVH). A disordered region spans residues 954–1004 (AGEDSPRLKSPAVQSPRSMPLASPRRSASRSPATGSQQPPPSPTISPYDES). Residues 968 to 990 (SPRSMPLASPRRSASRSPATGSQ) show a composition bias toward low complexity.

The protein belongs to the teashirt C2H2-type zinc-finger protein family. As to expression, expression in the Malpighian tubules (MTs) and stomatogastric nervous system starts at embryonic stage 10. At stage 11, expression in the head domain is initiated in the clypeolabrum in two bilaterally symmetric clusters of cells. At stage 12, expression appears in the central nervous system (CNS) of the trunk and the epidermis. The staining in the hindgut is maintained throughout embryogenesis. At stage 13, expression is present in elongating MTs. The anterior staining is detected in cells that invaginate into the stomodeum and by stage 15 onwards, in cells close to the pharynx. Also expressed in cells of the brain, the second constriction of the gut, the trunk epidermis, the anterior segments of the CNS (the three thoracic and the first two abdominal segments) and in the MTs. From stage 12 onwards, tsh and tio are colocalized in some cells.

The protein localises to the nucleus. Functionally, tiptop (tio) and teashirt (tsh) have, on the whole, common activities. Tio and tsh repress each other's expression and tsh has a crucial role for trunk patterning that is in part masked by ectopic expression of tiptop. Both genes share a common activity required for the activation of Ser and svb and the maintenance of en and wg. This is Protein tiptop (tio) from Drosophila melanogaster (Fruit fly).